Consider the following 383-residue polypeptide: S-adenosylmethionine synthase (383 aa).

His-15 lines the ATP pocket. Residue Asp-17 participates in Mg(2+) binding. Glu-43 contacts K(+). Glu-56 and Gln-99 together coordinate L-methionine. Residues 99 to 109 form a flexible loop region; that stretch reads QSPDINQGVDK. Residues 164 to 166, 230 to 231, Asp-239, 245 to 246, Ala-262, and Lys-266 each bind ATP; these read DAK, RF, and RK. Asp-239 is a binding site for L-methionine. Lys-270 contributes to the L-methionine binding site.

This sequence belongs to the AdoMet synthase family. As to quaternary structure, homotetramer; dimer of dimers. Mg(2+) is required as a cofactor. K(+) serves as cofactor.

It is found in the cytoplasm. It carries out the reaction L-methionine + ATP + H2O = S-adenosyl-L-methionine + phosphate + diphosphate. Its pathway is amino-acid biosynthesis; S-adenosyl-L-methionine biosynthesis; S-adenosyl-L-methionine from L-methionine: step 1/1. In terms of biological role, catalyzes the formation of S-adenosylmethionine (AdoMet) from methionine and ATP. The overall synthetic reaction is composed of two sequential steps, AdoMet formation and the subsequent tripolyphosphate hydrolysis which occurs prior to release of AdoMet from the enzyme. In Vibrio atlanticus (strain LGP32) (Vibrio splendidus (strain Mel32)), this protein is S-adenosylmethionine synthase.